Here is a 164-residue protein sequence, read N- to C-terminus: FMN reductase (NADH) RutF (164 aa).

The protein belongs to the non-flavoprotein flavin reductase family. RutF subfamily.

The catalysed reaction is FMNH2 + NAD(+) = FMN + NADH + 2 H(+). Its function is as follows. Catalyzes the reduction of FMN to FMNH2 which is used to reduce pyrimidine by RutA via the Rut pathway. The sequence is that of FMN reductase (NADH) RutF from Escherichia coli O81 (strain ED1a).